The chain runs to 181 residues: uncharacterized protein (181 aa).

A disordered region spans residues 151-181; sequence AQKKKDFQEPENKHEQLTSTKAPCQENWSDF. A compositionally biased stretch (basic and acidic residues) spans 154–166; it reads KKDFQEPENKHEQ. The segment covering 167–181 has biased composition (polar residues); it reads LTSTKAPCQENWSDF.

This is an uncharacterized protein from Caenorhabditis elegans.